The primary structure comprises 214 residues: MTIGIVGRKSGMTRIFTDDGLSVPVTVIEVDPNRITQVKSVETDGYAAVQVTVGSRRASRVTKAEAGHFAKAQTEAGRGVWELRNEAGEAFEVGGQLTVEAFEAGQKVDVTGTSKGKGFAGTVKRWNFRTQDATHGNSLSHRAPGSIGQCQTPGRVMKGKKMSGHMGAERVTTQNLEVVRVDVERNLLLIKGAVPGAPGGDVFIRPAVKLRNNG.

Residues 134-161 (THGNSLSHRAPGSIGQCQTPGRVMKGKK) are disordered. N5-methylglutamine is present on glutamine 151.

The protein belongs to the universal ribosomal protein uL3 family. As to quaternary structure, part of the 50S ribosomal subunit. Forms a cluster with proteins L14 and L19. In terms of processing, methylated by PrmB.

In terms of biological role, one of the primary rRNA binding proteins, it binds directly near the 3'-end of the 23S rRNA, where it nucleates assembly of the 50S subunit. The chain is Large ribosomal subunit protein uL3 from Teredinibacter turnerae (strain ATCC 39867 / T7901).